Here is a 181-residue protein sequence, read N- to C-terminus: Isopentenyl-diphosphate Delta-isomerase (181 aa).

The Mn(2+) site is built by His25 and His32. The Nudix hydrolase domain maps to Pro30 to Met164. Cys67 is an active-site residue. Mg(2+) is bound at residue Cys67. A Mn(2+)-binding site is contributed by His69. Glu87 lines the Mg(2+) pocket. Residues Glu114 and Glu116 each contribute to the Mn(2+) site. The active site involves Glu116.

Belongs to the IPP isomerase type 1 family. In terms of assembly, homodimer. Requires Mg(2+) as cofactor. It depends on Mn(2+) as a cofactor.

The protein localises to the cytoplasm. It catalyses the reaction isopentenyl diphosphate = dimethylallyl diphosphate. The protein operates within isoprenoid biosynthesis; dimethylallyl diphosphate biosynthesis; dimethylallyl diphosphate from isopentenyl diphosphate: step 1/1. Catalyzes the 1,3-allylic rearrangement of the homoallylic substrate isopentenyl (IPP) to its highly electrophilic allylic isomer, dimethylallyl diphosphate (DMAPP). The protein is Isopentenyl-diphosphate Delta-isomerase of Salmonella choleraesuis (strain SC-B67).